The primary structure comprises 287 residues: ATP synthase gamma chain (287 aa).

This sequence belongs to the ATPase gamma chain family. In terms of assembly, F-type ATPases have 2 components, CF(1) - the catalytic core - and CF(0) - the membrane proton channel. CF(1) has five subunits: alpha(3), beta(3), gamma(1), delta(1), epsilon(1). CF(0) has three main subunits: a, b and c.

It is found in the cell inner membrane. In terms of biological role, produces ATP from ADP in the presence of a proton gradient across the membrane. The gamma chain is believed to be important in regulating ATPase activity and the flow of protons through the CF(0) complex. The protein is ATP synthase gamma chain of Methylococcus capsulatus (strain ATCC 33009 / NCIMB 11132 / Bath).